We begin with the raw amino-acid sequence, 201 residues long: Recombination protein RecR (201 aa).

The C4-type zinc finger occupies 58–73 (CPECGLLTEEERCGLC). Residues 81 to 176 (TLLCVVESSA…RTTRIAHGVP (96 aa)) enclose the Toprim domain.

Belongs to the RecR family.

May play a role in DNA repair. It seems to be involved in an RecBC-independent recombinational process of DNA repair. It may act with RecF and RecO. This Halorhodospira halophila (strain DSM 244 / SL1) (Ectothiorhodospira halophila (strain DSM 244 / SL1)) protein is Recombination protein RecR.